A 393-amino-acid polypeptide reads, in one-letter code: Formate-dependent phosphoribosylglycinamide formyltransferase (393 aa).

N(1)-(5-phospho-beta-D-ribosyl)glycinamide-binding positions include 17–18 (EL) and glutamate 77. Residues arginine 109, lysine 150, 155–160 (SSGKGQ), 190–193 (EEFL), and glutamate 198 each bind ATP. In terms of domain architecture, ATP-grasp spans 114–304 (DLAAGELGLR…EFELHLRAVL (191 aa)). Mg(2+) contacts are provided by glutamate 263 and glutamate 275. Residues aspartate 282, lysine 354, and 361–362 (RR) contribute to the N(1)-(5-phospho-beta-D-ribosyl)glycinamide site.

It belongs to the PurK/PurT family. Homodimer.

The catalysed reaction is N(1)-(5-phospho-beta-D-ribosyl)glycinamide + formate + ATP = N(2)-formyl-N(1)-(5-phospho-beta-D-ribosyl)glycinamide + ADP + phosphate + H(+). It participates in purine metabolism; IMP biosynthesis via de novo pathway; N(2)-formyl-N(1)-(5-phospho-D-ribosyl)glycinamide from N(1)-(5-phospho-D-ribosyl)glycinamide (formate route): step 1/1. Functionally, involved in the de novo purine biosynthesis. Catalyzes the transfer of formate to 5-phospho-ribosyl-glycinamide (GAR), producing 5-phospho-ribosyl-N-formylglycinamide (FGAR). Formate is provided by PurU via hydrolysis of 10-formyl-tetrahydrofolate. The protein is Formate-dependent phosphoribosylglycinamide formyltransferase of Synechococcus sp. (strain RCC307).